The primary structure comprises 307 residues: Cysteine synthase (307 aa).

N6-(pyridoxal phosphate)lysine is present on lysine 42. Residues asparagine 72, 176–180 (GTGGH), and serine 263 each bind pyridoxal 5'-phosphate.

This sequence belongs to the cysteine synthase/cystathionine beta-synthase family. Pyridoxal 5'-phosphate serves as cofactor.

It carries out the reaction O-acetyl-L-serine + hydrogen sulfide = L-cysteine + acetate. It functions in the pathway amino-acid biosynthesis; L-cysteine biosynthesis; L-cysteine from L-serine: step 2/2. The chain is Cysteine synthase (cysK) from Flavobacterium sp. (strain K3-15 / DSM ID92-509).